The sequence spans 171 residues: Shikimate kinase (171 aa).

13-18 is a binding site for ATP; the sequence is GVGKST. Position 17 (serine 17) interacts with Mg(2+). Residues aspartate 35, arginine 59, and glycine 81 each coordinate substrate. Arginine 118 is a binding site for ATP. Position 136 (arginine 136) interacts with substrate. Position 153 (arginine 153) interacts with ATP.

This sequence belongs to the shikimate kinase family. In terms of assembly, monomer. The cofactor is Mg(2+).

It localises to the cytoplasm. It carries out the reaction shikimate + ATP = 3-phosphoshikimate + ADP + H(+). It functions in the pathway metabolic intermediate biosynthesis; chorismate biosynthesis; chorismate from D-erythrose 4-phosphate and phosphoenolpyruvate: step 5/7. In terms of biological role, catalyzes the specific phosphorylation of the 3-hydroxyl group of shikimic acid using ATP as a cosubstrate. The chain is Shikimate kinase from Streptomyces coelicolor (strain ATCC BAA-471 / A3(2) / M145).